An 863-amino-acid polypeptide reads, in one-letter code: Nitrate reductase [NADH] (863 aa).

Mo-molybdopterin is bound at residue Cys137. One can recognise a Cytochrome b5 heme-binding domain in the interval 484 to 559 (KKYVTKAMLE…LEQFYIAELA (76 aa)). Residues His519 and His542 each coordinate heme. The 118-residue stretch at 602–719 (KKQKAAELKE…KGPIGHFHYD (118 aa)) folds into the FAD-binding FR-type domain. FAD-binding positions include 659–662 (RAYT), 676–680 (VVKIY), Phe688, 693–695 (KFS), and Thr746.

It belongs to the nitrate reductase family. As to quaternary structure, homodimer. The cofactor is FAD. Mo-molybdopterin serves as cofactor. Requires heme as cofactor.

It carries out the reaction nitrite + NAD(+) + H2O = nitrate + NADH + H(+). In terms of biological role, nitrate reductase is a key enzyme involved in the first step of nitrate assimilation in plants, fungi and bacteria. The protein is Nitrate reductase [NADH] of Ulva prolifera (Green seaweed).